A 323-amino-acid chain; its full sequence is Breast cancer metastasis-suppressor 1-like protein-A (323 aa).

Over residues 1–15 (MPVHSREKKESNHEE) the composition is skewed to basic and acidic residues. A disordered region spans residues 1–52 (MPVHSREKKESNHEEMEVDFAEQEGSSSEDEDTESSSVSEDGESSEMDDEDC). Over residues 16 to 51 (MEVDFAEQEGSSSEDEDTESSSVSEDGESSEMDDED) the composition is skewed to acidic residues. Coiled coils occupy residues 50 to 81 (EDCE…YKER) and 156 to 178 (QTEL…ITSE).

Belongs to the BRMS1 family.

The protein localises to the nucleus. Its function is as follows. Involved in the histone deacetylase (HDAC1)-dependent transcriptional repression activity. This is Breast cancer metastasis-suppressor 1-like protein-A (brms1la) from Danio rerio (Zebrafish).